A 35-amino-acid chain; its full sequence is Endochitinase 2 (35 aa).

Belongs to the glycosyl hydrolase 19 family. Chitinase class I subfamily.

The catalysed reaction is Random endo-hydrolysis of N-acetyl-beta-D-glucosaminide (1-&gt;4)-beta-linkages in chitin and chitodextrins.. Defense against chitin-containing fungal pathogens. This Capsicum chinense (Scotch bonnet) protein is Endochitinase 2.